A 279-amino-acid polypeptide reads, in one-letter code: Armadillo repeat-containing protein 1 (279 aa).

The ARM repeat unit spans residues 36–78 (GCLPGLILFLDHPSPPVVHSALLALRYLAECRANREKMKGELG). A disordered region spans residues 236 to 257 (EYLPEDESPSKEQDKAVSRVGS). Over residues 243–252 (SPSKEQDKAV) the composition is skewed to basic and acidic residues.

As to quaternary structure, interacts with mitochondrial contact site and cristae organizing system (MICOS) complex components IMMT/MIC60 and MICOS10/MIC10. Interacts with mitochondrial outer membrane sorting assembly machinery (SAM) complex components SAMM50 and MTX1.

The protein resides in the cytoplasm. It localises to the mitochondrion. Its subcellular location is the mitochondrion outer membrane. Its function is as follows. In association with mitochondrial contact site and cristae organizing system (MICOS) complex components and mitochondrial outer membrane sorting assembly machinery (SAM) complex components may regulate mitochondrial dynamics playing a role in determining mitochondrial length, distribution and motility. The sequence is that of Armadillo repeat-containing protein 1 (ARMC1) from Gallus gallus (Chicken).